The primary structure comprises 221 residues: Small ribosomal subunit protein uS3c (221 aa).

One can recognise a KH type-2 domain in the interval 43–121; it reads IQNYIQKNMR…KLKIAITKIA (79 aa).

Belongs to the universal ribosomal protein uS3 family. Part of the 30S ribosomal subunit.

The protein resides in the plastid. Its subcellular location is the chloroplast. The protein is Small ribosomal subunit protein uS3c (rps3) of Jasminum nudiflorum (Winter jasmine).